The following is a 185-amino-acid chain: Alcohol dehydrogenase 1 (185 aa).

Residues 10 to 15, aspartate 34, lysine 39, 103 to 105, and arginine 180 contribute to the NAD(+) site; these read GLGGVG and VGV.

This sequence belongs to the zinc-containing alcohol dehydrogenase family. Class-I subfamily. As to quaternary structure, homodimer. Zn(2+) is required as a cofactor.

The protein resides in the cytoplasm. It catalyses the reaction a primary alcohol + NAD(+) = an aldehyde + NADH + H(+). The enzyme catalyses a secondary alcohol + NAD(+) = a ketone + NADH + H(+). In Anas platyrhynchos (Mallard), this protein is Alcohol dehydrogenase 1 (ADH1).